A 380-amino-acid chain; its full sequence is Histone deacetylase-like amidohydrolase (380 aa).

Histidine 144 acts as the Proton donor/acceptor in catalysis. Aspartate 181, histidine 183, and aspartate 269 together coordinate Zn(2+).

Belongs to the histone deacetylase family. Homotetramer; dimer of head-to-head dimers. Zn(2+) serves as cofactor.

Is inhibited by azobenzenes, stilbenes and arylazopyrazoles. Probable protein deacetylase that catalyzes deacetylation of acetylated lysine residues. In vitro, exhibits high activity against artificial HDAC (histone deacetylase) substrates containing acetylated and trifluoroacetylated lysine residues. Is not able to deacetylate acetylated polyamines. This chain is Histone deacetylase-like amidohydrolase, found in Pseudomonas aeruginosa (strain ATCC 15692 / DSM 22644 / CIP 104116 / JCM 14847 / LMG 12228 / 1C / PRS 101 / PAO1).